Here is a 63-residue protein sequence, read N- to C-terminus: DNA-directed RNA polymerase 7 kDa subunit (63 aa).

It belongs to the poxviridae DNA-directed RNA polymerase 7 kDa subunit family. The DNA-dependent RNA polymerase used for intermediate and late genes expression consists of eight subunits 147 kDa, 133 kDa, 35 kDa, 30 kDa, 22 kDa, 19 kDa, 18 kDa and 7 kDa totalling more than 500 kDa in mass. The same holoenzyme, with the addition of the transcription-specificity factor RAP94, is used for early gene expression.

Its subcellular location is the virion. The enzyme catalyses RNA(n) + a ribonucleoside 5'-triphosphate = RNA(n+1) + diphosphate. Functionally, part of the DNA-dependent RNA polymerase which catalyzes the transcription of viral DNA into RNA using the four ribonucleoside triphosphates as substrates. Responsible for the transcription of early, intermediate and late genes. DNA-dependent RNA polymerase associates with the early transcription factor (ETF) thereby allowing the early genes transcription. Late transcription, and probably also intermediate transcription, require newly synthesized RNA polymerase. This is DNA-directed RNA polymerase 7 kDa subunit (RPO7) from Fowlpox virus (strain NVSL) (FPV).